Reading from the N-terminus, the 457-residue chain is MLHVTRGVWGSIVRVWPLLPSFLGHSRALSSLEAKMGEYRKMWNPTEPRDWAQQYRERHIPFSKEQLLRLLIQEFHSTPAEKAALEEFTAHVDFCTLFHYHHVLTQLQALYDPINPDRETLDQPSLTDPQRLSNEKEVLQALEPLLAQANFSPLTEDTLAYALVVHHPQDEVQVTINLDQYIYMHFWALGQRVGKMPRKSSVGSKRFFFKSPPAERRYFKRVILAARTKKGHLVLKSFKDTPLEGLEQLLPELKVRTSTLQRAILNVTLIVSGVVFFVNVGMVVLSDLKMATSLLLLLFAAFMGLRAAKMFGHRRSAQALELAHMLYYRSTSNNAELLSALVLRAQDEHTKETLLAHSFLARRPGGAKGPPEETSQWLQSEVENWLLAQSGCDVAFNGKRALAHLQALPPTVGMYPPPGLPKLDLLATLSSPKSAPSDDNSLEKPLGPAQPSHLVGN.

2 helical membrane passes run 264-284 and 285-305; these read ILNV…GMVV and LSDL…FMGL. Phosphoserine is present on Ser-316. Residues 429–439 show a composition bias toward polar residues; it reads LSSPKSAPSDD. The disordered stretch occupies residues 429-457; the sequence is LSSPKSAPSDDNSLEKPLGPAQPSHLVGN.

It is found in the membrane. The polypeptide is Transmembrane protein 143 (TMEM143) (Bos taurus (Bovine)).